The sequence spans 273 residues: Putative pyruvate, phosphate dikinase regulatory protein (273 aa).

153 to 160 (GISRTSKT) lines the ADP pocket.

The protein belongs to the pyruvate, phosphate/water dikinase regulatory protein family. PDRP subfamily.

The enzyme catalyses N(tele)-phospho-L-histidyl/L-threonyl-[pyruvate, phosphate dikinase] + ADP = N(tele)-phospho-L-histidyl/O-phospho-L-threonyl-[pyruvate, phosphate dikinase] + AMP + H(+). It catalyses the reaction N(tele)-phospho-L-histidyl/O-phospho-L-threonyl-[pyruvate, phosphate dikinase] + phosphate + H(+) = N(tele)-phospho-L-histidyl/L-threonyl-[pyruvate, phosphate dikinase] + diphosphate. Functionally, bifunctional serine/threonine kinase and phosphorylase involved in the regulation of the pyruvate, phosphate dikinase (PPDK) by catalyzing its phosphorylation/dephosphorylation. This is Putative pyruvate, phosphate dikinase regulatory protein from Rhizobium johnstonii (strain DSM 114642 / LMG 32736 / 3841) (Rhizobium leguminosarum bv. viciae).